The sequence spans 360 residues: UDP-N-acetylglucosamine--N-acetylmuramyl-(pentapeptide) pyrophosphoryl-undecaprenol N-acetylglucosamine transferase (360 aa).

UDP-N-acetyl-alpha-D-glucosamine is bound by residues 13-15 (TGG), N125, R164, S191, and Q290.

The protein belongs to the glycosyltransferase 28 family. MurG subfamily.

The protein localises to the cell inner membrane. The catalysed reaction is di-trans,octa-cis-undecaprenyl diphospho-N-acetyl-alpha-D-muramoyl-L-alanyl-D-glutamyl-meso-2,6-diaminopimeloyl-D-alanyl-D-alanine + UDP-N-acetyl-alpha-D-glucosamine = di-trans,octa-cis-undecaprenyl diphospho-[N-acetyl-alpha-D-glucosaminyl-(1-&gt;4)]-N-acetyl-alpha-D-muramoyl-L-alanyl-D-glutamyl-meso-2,6-diaminopimeloyl-D-alanyl-D-alanine + UDP + H(+). Its pathway is cell wall biogenesis; peptidoglycan biosynthesis. Functionally, cell wall formation. Catalyzes the transfer of a GlcNAc subunit on undecaprenyl-pyrophosphoryl-MurNAc-pentapeptide (lipid intermediate I) to form undecaprenyl-pyrophosphoryl-MurNAc-(pentapeptide)GlcNAc (lipid intermediate II). This is UDP-N-acetylglucosamine--N-acetylmuramyl-(pentapeptide) pyrophosphoryl-undecaprenol N-acetylglucosamine transferase from Hahella chejuensis (strain KCTC 2396).